Consider the following 308-residue polypeptide: Eukaryotic translation initiation factor 3 subunit G (308 aa).

Residues 1–23 (MAPVAAPSTSQPAGGKPMNWADE) are disordered. The 79-residue stretch at 225–303 (PTLRVTNLSE…LILSCQWSLP (79 aa)) folds into the RRM domain.

This sequence belongs to the eIF-3 subunit G family. In terms of assembly, component of the eukaryotic translation initiation factor 3 (eIF-3) complex.

It localises to the cytoplasm. Functionally, RNA-binding component of the eukaryotic translation initiation factor 3 (eIF-3) complex, which is involved in protein synthesis of a specialized repertoire of mRNAs and, together with other initiation factors, stimulates binding of mRNA and methionyl-tRNAi to the 40S ribosome. The eIF-3 complex specifically targets and initiates translation of a subset of mRNAs involved in cell proliferation. This subunit can bind 18S rRNA. The protein is Eukaryotic translation initiation factor 3 subunit G of Mycosarcoma maydis (Corn smut fungus).